Consider the following 322-residue polypeptide: CXXC-type zinc finger protein 5 (322 aa).

Gly residues predominate over residues 1–10 (MSSLGGGSQD). Residues 1-100 (MSSLGGGSQD…SGGGSMMGGE (100 aa)) form a disordered region. Composition is skewed to low complexity over residues 11 to 20 (AGGSSSSSTN) and 28 to 52 (SGPK…VADD). Thr53 bears the Phosphothreonine mark. Over residues 87-97 (SSGGSGGGSMM) the composition is skewed to gly residues. Residues 256-297 (GKKKRKRCGMCAPCRRRINCEQCSSCRNRKTGHQICKFRKCE) form a CXXC-type zinc finger. Residues 257 to 262 (KKKRKR) carry the Nuclear localization signal motif. Zn(2+) contacts are provided by Cys263, Cys266, Cys269, Cys275, Cys278, Cys281, Cys291, and Cys296.

In terms of assembly, interacts with DVL1. Interacts with RBPJ.

Its subcellular location is the nucleus. The protein localises to the cytoplasm. Functionally, may indirectly participate in activation of the NF-kappa-B and MAPK pathways. Acts as a mediator of BMP4-mediated modulation of canonical Wnt signaling activity in neural stem cells. Required for DNA damage-induced ATM phosphorylation, p53 activation and cell cycle arrest. Involved in myelopoiesis. Transcription factor. Binds to the oxygen responsive element of COX4I2 and represses its transcription under hypoxia conditions (4% oxygen), as well as normoxia conditions (20% oxygen). May repress COX4I2 transactivation induced by CHCHD2 and RBPJ. Binds preferentially to DNA containing cytidine-phosphate-guanosine (CpG) dinucleotides over CpH (H=A, T, and C), hemimethylated-CpG and hemimethylated-hydroxymethyl-CpG. The protein is CXXC-type zinc finger protein 5 (CXXC5) of Homo sapiens (Human).